A 547-amino-acid polypeptide reads, in one-letter code: Chaperonin GroEL (547 aa).

Residues 30–33, Lys51, 87–91, Gly414, 478–480, and Asp494 contribute to the ATP site; these read TLGP, DGTTT, and NAA.

This sequence belongs to the chaperonin (HSP60) family. In terms of assembly, forms a cylinder of 14 subunits composed of two heptameric rings stacked back-to-back. Interacts with the co-chaperonin GroES.

Its subcellular location is the cytoplasm. It carries out the reaction ATP + H2O + a folded polypeptide = ADP + phosphate + an unfolded polypeptide.. Functionally, together with its co-chaperonin GroES, plays an essential role in assisting protein folding. The GroEL-GroES system forms a nano-cage that allows encapsulation of the non-native substrate proteins and provides a physical environment optimized to promote and accelerate protein folding. This chain is Chaperonin GroEL, found in Klebsiella pneumoniae.